A 200-amino-acid chain; its full sequence is Nucleoside triphosphate pyrophosphatase (200 aa).

Residue aspartate 79 is the Proton acceptor of the active site.

The protein belongs to the Maf family. The cofactor is a divalent metal cation.

It is found in the cytoplasm. The enzyme catalyses a ribonucleoside 5'-triphosphate + H2O = a ribonucleoside 5'-phosphate + diphosphate + H(+). The catalysed reaction is a 2'-deoxyribonucleoside 5'-triphosphate + H2O = a 2'-deoxyribonucleoside 5'-phosphate + diphosphate + H(+). Nucleoside triphosphate pyrophosphatase. May have a dual role in cell division arrest and in preventing the incorporation of modified nucleotides into cellular nucleic acids. The chain is Nucleoside triphosphate pyrophosphatase from Legionella pneumophila (strain Lens).